Here is a 515-residue protein sequence, read N- to C-terminus: 2-isopropylmalate synthase (515 aa).

The region spanning 5 to 268 is the Pyruvate carboxyltransferase domain; sequence VIIFDTTLRD…VCGIDATQIV (264 aa). Mn(2+) contacts are provided by Asp14, His202, His204, and Asn239. A regulatory domain region spans residues 394-515; that stretch reads KFISLSQHSE…QAKLNAQMTP (122 aa).

This sequence belongs to the alpha-IPM synthase/homocitrate synthase family. LeuA type 1 subfamily. In terms of assembly, homodimer. Mn(2+) is required as a cofactor.

It localises to the cytoplasm. It carries out the reaction 3-methyl-2-oxobutanoate + acetyl-CoA + H2O = (2S)-2-isopropylmalate + CoA + H(+). It participates in amino-acid biosynthesis; L-leucine biosynthesis; L-leucine from 3-methyl-2-oxobutanoate: step 1/4. In terms of biological role, catalyzes the condensation of the acetyl group of acetyl-CoA with 3-methyl-2-oxobutanoate (2-ketoisovalerate) to form 3-carboxy-3-hydroxy-4-methylpentanoate (2-isopropylmalate). This Polynucleobacter necessarius subsp. necessarius (strain STIR1) protein is 2-isopropylmalate synthase.